The following is a 341-amino-acid chain: MKPQAILARILEQRETPYEEMVELMRAIMSGNVSPAMTAALMTGLRMKRESIGEITAAAQVMRELALHIEVADSVNLVDTCGTGGDGCNTFNISTASAFVAAAADAQVAKHGGRSVSSKAGSADVLEAIGIHLNQTPDQIAQSITEVGIGFMFAPNFHHAMKHAAPVRRELGVRTLFNILGPLTNPAGAKNQLLGVFNEDLTGILAQALLRLGSQHAMIVHGSDGLDEITISGPTKIAELKEGEIREYTVQPEDFGLERTAIESLQVNSTDDARVMLLSVLDNHPGPARDIVLLNAGAAIYVAGKADSWAEGVEIARDKLASGAAKEKMLALIKFSNQLTH.

Residues Gly82, 85 to 86, Thr90, 92 to 95, 110 to 118, and Ser122 each bind 5-phospho-alpha-D-ribose 1-diphosphate; these read GD, NIST, and KHGGRSVSS. Residue Gly82 participates in anthranilate binding. Ser94 provides a ligand contact to Mg(2+). Arg168 provides a ligand contact to anthranilate. Mg(2+) contacts are provided by Asp227 and Glu228.

It belongs to the anthranilate phosphoribosyltransferase family. In terms of assembly, homodimer. Mg(2+) serves as cofactor.

The enzyme catalyses N-(5-phospho-beta-D-ribosyl)anthranilate + diphosphate = 5-phospho-alpha-D-ribose 1-diphosphate + anthranilate. It participates in amino-acid biosynthesis; L-tryptophan biosynthesis; L-tryptophan from chorismate: step 2/5. Functionally, catalyzes the transfer of the phosphoribosyl group of 5-phosphorylribose-1-pyrophosphate (PRPP) to anthranilate to yield N-(5'-phosphoribosyl)-anthranilate (PRA). The sequence is that of Anthranilate phosphoribosyltransferase from Nitrosomonas eutropha (strain DSM 101675 / C91 / Nm57).